The primary structure comprises 31 residues: Photosystem I reaction center subunit XII (31 aa).

Residues 7-26 (QISIILLIALIPAFFSLKLG) traverse the membrane as a helical segment.

Belongs to the PsaM family.

It is found in the plastid. Its subcellular location is the chloroplast thylakoid membrane. The sequence is that of Photosystem I reaction center subunit XII from Euglena myxocylindracea.